A 664-amino-acid chain; its full sequence is Exoribonuclease 2 (664 aa).

An RNB domain is found at 193-521 (RIDMTHIPFV…INHRMLKALI (329 aa)). Residues 568-650 (QTLFTGEIFD…ENRSLVAKPT (83 aa)) form the S1 motif domain.

It belongs to the RNR ribonuclease family. RNase II subfamily.

It is found in the cytoplasm. The catalysed reaction is Exonucleolytic cleavage in the 3'- to 5'-direction to yield nucleoside 5'-phosphates.. Functionally, involved in mRNA degradation. Hydrolyzes single-stranded polyribonucleotides processively in the 3' to 5' direction. The sequence is that of Exoribonuclease 2 from Vibrio vulnificus (strain YJ016).